Here is a 234-residue protein sequence, read N- to C-terminus: Melanoregulin (234 aa).

The interval M215–D234 is disordered. The span at G222 to D234 shows a compositional bias: acidic residues.

Belongs to the melanoregulin family.

The protein localises to the apical cell membrane. Its subcellular location is the melanosome membrane. The protein resides in the lysosome membrane. It is found in the cytoplasmic vesicle membrane. Probably functions as a cargo-recognition protein that couples cytoplasmic vesicles to the transport machinery. Contributes to retrograde melanosome transport from the cell periphery to the center. Overexpression causes accumulation of late endosomes and/or lysosomes at the microtubule organising center (MTOC) at the center of the cell. Probably binds cholesterol and requires the presence of cholesterol in membranes to function in microtubule-mediated retrograde organelle transport. Binds phosphatidylinositol 3-phosphate, phosphatidylinositol 4-phosphate, phosphatidylinositol 5-phosphate and phosphatidylinositol 3,5-bisphosphate. In Danio rerio (Zebrafish), this protein is Melanoregulin (mreg).